The sequence spans 320 residues: 1-aminocyclopropane-1-carboxylate oxidase 3 (320 aa).

Residues 111 to 131 adopt a coiled-coil conformation; that stretch reads NEYRLAMKDFGKRLEILAEEL. The Fe2OG dioxygenase domain occupies 155-256; the sequence is GPTFATKLSN…RMSIASFYNP (102 aa). The Fe cation site is built by His-180, Asp-182, and His-237. A 2-oxoglutarate-binding site is contributed by Arg-247.

It belongs to the iron/ascorbate-dependent oxidoreductase family. The cofactor is Fe(2+).

It catalyses the reaction 1-aminocyclopropane-1-carboxylate + L-ascorbate + O2 = ethene + L-dehydroascorbate + hydrogen cyanide + CO2 + 2 H2O. It participates in alkene biosynthesis; ethylene biosynthesis via S-adenosyl-L-methionine; ethylene from S-adenosyl-L-methionine: step 2/2. Its function is as follows. Enzyme involved in the ethylene biosynthesis. May promote stem elongation by maximizing the extensibility cells, possibly by activating ethylene biosynthesis, in response to very-long-chain fatty acids (VLCFAs C20:0 to C30:0). In Arabidopsis thaliana (Mouse-ear cress), this protein is 1-aminocyclopropane-1-carboxylate oxidase 3.